The following is a 717-amino-acid chain: MQKFTFFVSCAKGIELLLKDELERLGISSQEKLAGVEFEGSIKDAYKVCIYSYLASQVMLKVATDKVINQQDLYEFISSINWMDYFAVDKTFKIIISGKHYDFNNTMFVSQKTKDAIVDQFRNVTNQRPNIDTENPDNVIKLHLHKQFVNVFLCLNIDSLHKRSYRQFQGQAPLKESLAAAILIKAGWLEELKKHQPILIDPMCGSGTILIEAALMAKNIAPVLLNKEFKIFNSKFHNQELWDNLLEIAKNSQKVTNAIICGFDIDNNVLDKAQRNIYQAGVEDVVTVKRQDIRDLENEFESEGLIVTNPPYGERLYGDQLDELLDIFNGFGDRLSQDFYGWKVAVLTSFADSIKEMQLRTTERNKFYNGAIETILYQFEINEHAKFKHETQLEKNIRIAEASAQKSDEHIDFANKLKKNLKSLKPWLKQTGLECYRLYDADIPTFAVAVDVYSEHIFLQEYRADATIDQNIAKQRFYQAIYQIHKTLDIKYENIHTRVRQRQKGKEQYQKENDKNKFHIINEFDAKFYVNFDDYLDTGIFLDHRKIRQLVAKAAKNKTLLNLFSYTCTASVHAALKGAKTTSVDMSNTYLEWGKNNFTLNNIDAKKHSFIQADCISWLKTNKDKFDVIFLDPPTFSNSKRMDDILDIQRDHELLINLAMDSLKKDGILYFSNNYRRFKMSPQILEKFNCENIDKICLSRDFLSNKNIHNCWEIKYK.

Positions 44 to 155 (DAYKVCIYSY…KQFVNVFLCL (112 aa)) constitute a THUMP domain.

The protein belongs to the methyltransferase superfamily. RlmKL family.

It localises to the cytoplasm. It catalyses the reaction guanosine(2445) in 23S rRNA + S-adenosyl-L-methionine = N(2)-methylguanosine(2445) in 23S rRNA + S-adenosyl-L-homocysteine + H(+). The catalysed reaction is guanosine(2069) in 23S rRNA + S-adenosyl-L-methionine = N(2)-methylguanosine(2069) in 23S rRNA + S-adenosyl-L-homocysteine + H(+). In terms of biological role, specifically methylates the guanine in position 2445 (m2G2445) and the guanine in position 2069 (m7G2069) of 23S rRNA. The protein is Ribosomal RNA large subunit methyltransferase K/L of Francisella tularensis subsp. tularensis (strain WY96-3418).